The sequence spans 627 residues: 1-deoxy-D-xylulose-5-phosphate synthase (627 aa).

Thiamine diphosphate-binding positions include His87 and 128-130 (GHS). Asp159 is a Mg(2+) binding site. Thiamine diphosphate is bound by residues 160 to 161 (GA), Asn188, Phe295, and Glu375. Asn188 is a Mg(2+) binding site.

This sequence belongs to the transketolase family. DXPS subfamily. In terms of assembly, homodimer. The cofactor is Mg(2+). Thiamine diphosphate serves as cofactor.

The enzyme catalyses D-glyceraldehyde 3-phosphate + pyruvate + H(+) = 1-deoxy-D-xylulose 5-phosphate + CO2. It functions in the pathway metabolic intermediate biosynthesis; 1-deoxy-D-xylulose 5-phosphate biosynthesis; 1-deoxy-D-xylulose 5-phosphate from D-glyceraldehyde 3-phosphate and pyruvate: step 1/1. In terms of biological role, catalyzes the acyloin condensation reaction between C atoms 2 and 3 of pyruvate and glyceraldehyde 3-phosphate to yield 1-deoxy-D-xylulose-5-phosphate (DXP). The chain is 1-deoxy-D-xylulose-5-phosphate synthase from Pseudomonas aeruginosa (strain LESB58).